We begin with the raw amino-acid sequence, 1328 residues long: WASH complex subunit 2 (1328 aa).

The segment at 1–219 (MNRTSPDSEQ…VGSDRGSIVD (219 aa)) is sufficient for interaction with WASHC3, WASHC4 and WASHC5; required for interaction with WASHC1. Phosphoserine occurs at positions 157, 159, 204, 205, and 209. The segment covering 201-213 (GELSSEEGSVGSD) has biased composition (low complexity). 2 disordered regions span residues 201–655 (GELS…KTNL) and 675–830 (KKTQ…PKST). Acidic residues-rich tracts occupy residues 219–231 (DSED…ESDD) and 248–273 (SDEE…EDIE). Residue S283 is modified to Phosphoserine. Over residues 288–323 (LAARIKGDVSNQRKEGHTDGKPQRTVKEKKERRTPA) the composition is skewed to basic and acidic residues. T321 bears the Phosphothreonine mark. Positions 346 to 592 (SRGGLFSDRQ…QTSSLPPQSQ (247 aa)) are sufficient for interaction with CCDC93. The tract at residues 347–1328 (RGGLFSDRQG…DDPLNAFGSQ (982 aa)) is interaction with VPS35. The LFa 1 motif lies at 357-367 (LFDDDDESDLF). S384 and S387 each carry phosphoserine. 2 consecutive short sequence motifs (LFa) follow at residues 440–455 (LFDD…DNFF) and 474–483 (IFDDDEGDLF). The segment covering 441 to 453 (FDDDDNDSDEDDN) has biased composition (acidic residues). A compositionally biased stretch (polar residues) spans 508 to 528 (TITLPSSKNPKLVSETKTQKG). Short sequence motifs (LFa) lie at residues 529 to 540 (LFSDEEDSEDLF) and 564 to 575 (LFGDEDEEDNLF). Phosphoserine is present on residues S531 and S536. Low complexity predominate over residues 539–556 (LFSSQSSSKTKSASVLSS). The span at 582–592 (KQTSSLPPQSQ) shows a compositional bias: polar residues. Phosphoserine is present on residues S610 and S611. Over residues 627–638 (ASERKSKGERWD) the composition is skewed to basic and acidic residues. Short sequence motifs (LFa) lie at residues 655–667 (LFEE…VDLF) and 683–695 (LFED…SSLF). Positions 690–699 (SGSSLFSLPP) are enriched in polar residues. S720, S744, S749, S780, and S795 each carry phosphoserine. Residues 797–808 (FDEDEDKVEDDS) show a composition bias toward acidic residues. 2 consecutive short sequence motifs (LFa) follow at residues 832–840 (VFQDEELLF) and 849–855 (DPDVDLF). Disordered stretches follow at residues 863 to 940 (LSMP…EPSS) and 991 to 1088 (PTLP…AMAV). Phosphoserine occurs at positions 867 and 870. Residues 871-881 (LFGDDDDDDLF) carry the LFa 10 motif. The segment covering 894–919 (PEKKGTLRKDHKPPELTEGSKEKSTW) has biased composition (basic and acidic residues). Positions 925–1328 (QDSSGLTPFK…DDPLNAFGSQ (404 aa)) are interaction with phospholipids. Residues 1016 to 1034 (NKGRVKVRGKRRPQTRAAR) are compositionally biased toward basic residues. The tract at residues 1017–1035 (KGRVKVRGKRRPQTRAARR) is required for interaction with F-actin-capping protein subunit alpha (CAPZA1 or CAPZA2 or CAPZA3). Phosphoserine occurs at positions 1042, 1060, 1077, and 1102. Residues 1115–1210 (AHLFDSGDIF…KKNQWKSDSH (96 aa)) are disordered. Short sequence motifs (LFa) lie at residues 1117–1124 (LFDSGDIF), 1157–1171 (VFPD…DDLF), and 1187–1195 (LLEDEEDLF). Phosphoserine is present on residues S1162 and S1165. Basic and acidic residues predominate over residues 1196-1210 (ADQKGKKNQWKSDSH). 3 consecutive short sequence motifs (LFa) follow at residues 1220–1226 (IFEDDIF), 1249–1257 (LFDDNIDIF), and 1277–1286 (MFDDDTDDIF). Residues 1289–1310 (GLQAKASKPKSQSAEAVSELRS) form a disordered region. The LFa 17 signature appears at 1317-1325 (IFDDPLNAF). Position 1327 is a phosphoserine (S1327).

Belongs to the FAM21 family. Component of the WASH core complex also described as WASH regulatory complex (SHRC) composed of WASHC1, WASHC2, WASHC3, WASHC4 and WASHC5; in the complex interacts (via N-terminus) directly with WASHC1. The WASH core complex associates with the F-actin-capping protein dimer (formed by CAPZA1, CAPZA2 or CAPZA3 and CAPZB) in a transient or substoichiometric manner which was initially described as WASH complex. Interacts with VPS35; mediates the association with the retromer CSC complex. Interacts with FKBP15. Interacts with CCDC93, CCDC22, VPS35L; indicative for an association of the WASH core complex with the CCC and retriever complexes. Directly interacts with TBC1D23.

Its subcellular location is the early endosome membrane. The protein localises to the cell membrane. In terms of biological role, acts as a component of the WASH core complex that functions as a nucleation-promoting factor (NPF) at the surface of endosomes, where it recruits and activates the Arp2/3 complex to induce actin polymerization, playing a key role in the fission of tubules that serve as transport intermediates during endosome sorting. Mediates the recruitment of the WASH core complex to endosome membranes via binding to phospholipids and VPS35 of the retromer CSC. Mediates the recruitment of the F-actin-capping protein dimer to the WASH core complex probably promoting localized F-actin polymerization needed for vesicle scission. Via its C-terminus binds various phospholipids, most strongly phosphatidylinositol 4-phosphate (PtdIns-(4)P), phosphatidylinositol 5-phosphate (PtdIns-(5)P) and phosphatidylinositol 3,5-bisphosphate (PtdIns-(3,5)P2). Involved in the endosome-to-plasma membrane trafficking and recycling of SNX27-retromer-dependent cargo proteins, such as GLUT1. Required for the association of DNAJC13, ENTR1, ANKRD50 with retromer CSC subunit VPS35. Required for the endosomal recruitment of CCC and retriever complexes subunits COMMD1 and CCDC93 as well as the retrievere complex subunit VPS35L. The polypeptide is WASH complex subunit 2 (Rattus norvegicus (Rat)).